A 179-amino-acid polypeptide reads, in one-letter code: Cell division protein ZapC (179 aa).

This sequence belongs to the ZapC family. Interacts directly with FtsZ.

Its subcellular location is the cytoplasm. In terms of biological role, contributes to the efficiency of the cell division process by stabilizing the polymeric form of the cell division protein FtsZ. Acts by promoting interactions between FtsZ protofilaments and suppressing the GTPase activity of FtsZ. The polypeptide is Cell division protein ZapC (Tolumonas auensis (strain DSM 9187 / NBRC 110442 / TA 4)).